Consider the following 302-residue polypeptide: GrpE protein homolog 1, mitochondrial (302 aa).

The transit peptide at 1–39 directs the protein to the mitochondrion; that stretch reads MLVSRVLSRVSRSAGLRSSFSSVVTPKRNQIPIVASRFH. Residues 77–97 are disordered; it reads SAEPKGNESNTEVPKTGETSE.

Belongs to the GrpE family. Probable component of the PAM complex, at least composed of SSC1 (mtHsp70), MGE1, TIM44, PAM16/TIM16, PAM17 and PAM18/TIM14. Interacts with SSQ1.

The protein localises to the mitochondrion matrix. In terms of biological role, essential component of the PAM complex, a complex required for the translocation of transit peptide-containing proteins from the inner membrane into the mitochondrial matrix in an ATP-dependent manner. Seems to control the nucleotide-dependent binding of mitochondrial HSP70 to substrate proteins. Binds ATP. Interacts with copper ions Cu(2+). This chain is GrpE protein homolog 1, mitochondrial, found in Arabidopsis thaliana (Mouse-ear cress).